Here is a 1116-residue protein sequence, read N- to C-terminus: Angiopoietin-1 receptor (1116 aa).

The signal sequence occupies residues 1-21; the sequence is MCLLDSCTALLLLGCWMSGSA. At 22–745 the chain is on the extracellular side; that stretch reads VRISDVTLVN…FAAHGHLLLY (724 aa). Cys-46 and Cys-106 are disulfide-bonded. An Ig-like C2-type 1 domain is found at 46 to 126; it reads CVSSDWSSGG…YTYKMLQEAA (81 aa). 3 N-linked (GlcNAc...) asparagine glycosylation sites follow: Asn-110, Asn-143, and Asn-223. EGF-like domains lie at 214–256, 258–302, and 304–342; these read SCRA…HTCD, VCGE…LSCN, and ACPD…SRCE. Cystine bridges form between Cys-215–Cys-224, Cys-228–Cys-237, Cys-231–Cys-244, Cys-246–Cys-255, Cys-259–Cys-268, Cys-272–Cys-277, Cys-283–Cys-290, Cys-292–Cys-301, Cys-305–Cys-314, Cys-318–Cys-325, Cys-320–Cys-331, and Cys-333–Cys-341. The Ig-like C2-type 2 domain maps to 348–438; that stretch reads PVISHLRDVE…MQVEDEFTVE (91 aa). N-linked (GlcNAc...) asparagine glycans are attached at residues Asn-367, Asn-387, and Asn-425. A disulfide bridge connects residues Cys-368 and Cys-422. 3 consecutive Fibronectin type-III domains span residues 444-538, 540-633, and 634-729; these read RPQN…TQVL, LPVG…QLPP, and PPAN…TLPQ. Residues Asn-590, Asn-637, and Asn-642 are each glycosylated (N-linked (GlcNAc...) asparagine). A helical membrane pass occupies residues 746–766; that stretch reads AILGSAGMTCCTVLLAFCIVL. The Cytoplasmic segment spans residues 767–1116; that stretch reads QLKRNTLQRR…GIDCSAEEAG (350 aa). A Protein kinase domain is found at 816–1095; the sequence is IQFQDVLGEG…RMLEERKTYV (280 aa). Residues 822–830 and Lys-847 contribute to the ATP site; that span reads LGEGNFGQV. At Tyr-852 the chain carries Phosphotyrosine; by autocatalysis. Residue Asp-956 is the Proton acceptor of the active site. A phosphotyrosine; by autocatalysis mark is found at Tyr-984, Tyr-1094, and Tyr-1100.

The protein belongs to the protein kinase superfamily. Tyr protein kinase family. Tie subfamily. Interacts with svep1. Post-translationally, autophosphorylated on tyrosine residues in response to ligand binding. Autophosphorylation occurs in trans, i.e. one subunit of the dimeric receptor phosphorylates tyrosine residues on the other subunit. Autophosphorylation occurs in a sequential manner, where Tyr-984 in the kinase activation loop is phosphorylated first, followed by autophosphorylation at additional tyrosine residues. Phosphorylation is important for interaction with scaffold proteins and effectors.

The protein resides in the cell membrane. It localises to the cell junction. It is found in the focal adhesion. The protein localises to the cytoplasm. Its subcellular location is the cytoskeleton. It catalyses the reaction L-tyrosyl-[protein] + ATP = O-phospho-L-tyrosyl-[protein] + ADP + H(+). Angiopoietin binding leads to receptor dimerization and activation by autophosphorylation at Tyr-984 on the kinase activation loop. Its function is as follows. Tyrosine-protein kinase that acts as a cell-surface receptor for angiopoietins and regulates angiogenesis, endothelial cell survival, proliferation, migration, adhesion and cell spreading, reorganization of the actin cytoskeleton, but also maintenance of vascular quiescence. Can activate or inhibit angiogenesis, depending on the context. Angiopoietin signaling triggers receptor dimerization and autophosphorylation at specific tyrosine residues that then serve as binding sites for scaffold proteins and effectors. The chain is Angiopoietin-1 receptor from Danio rerio (Zebrafish).